Here is a 259-residue protein sequence, read N- to C-terminus: Glycerol-3-phosphate acyltransferase (259 aa).

7 helical membrane-spanning segments follow: residues 11 to 31 (IILASVVGYFLGSISWSIIIV), 62 to 82 (LVVAFLDALKVIFTSIIAILL), 93 to 112 (TSYFIPCIFALIGHCFPIYY), 124 to 144 (LGLLFVVNILYLIIFLIVWFI), 152 to 172 (VSVASIFSAFFVLIIMWIPYL), 188 to 208 (FSVAWKNYILFSLLNSFHYWF), and 211 to 231 (IWASGMLEGNIIVLIGGLILG).

The protein belongs to the PlsY family. Probably interacts with PlsX.

The protein localises to the cell membrane. The enzyme catalyses an acyl phosphate + sn-glycerol 3-phosphate = a 1-acyl-sn-glycero-3-phosphate + phosphate. Its pathway is lipid metabolism; phospholipid metabolism. Its function is as follows. Catalyzes the transfer of an acyl group from acyl-phosphate (acyl-PO(4)) to glycerol-3-phosphate (G3P) to form lysophosphatidic acid (LPA). This enzyme utilizes acyl-phosphate as fatty acyl donor, but not acyl-CoA or acyl-ACP. This chain is Glycerol-3-phosphate acyltransferase, found in Mycoplasma capricolum subsp. capricolum (strain California kid / ATCC 27343 / NCTC 10154).